Here is a 356-residue protein sequence, read N- to C-terminus: Cell division protein ZipA (356 aa).

Residues 1–6 (MEDLQL) lie on the Periplasmic side of the membrane. The chain crosses the membrane as a helical span at residues 7-27 (VLFVLGAIAIVAVLVHGFWSI). Topologically, residues 28–356 (RRQQPKSLKD…DYLHRIRANA (329 aa)) are cytoplasmic. Residues 132 to 155 (PAQPDFSLQPPVAKEQHRGPKVSR) are disordered.

The protein belongs to the ZipA family. In terms of assembly, interacts with FtsZ via their C-terminal domains.

It is found in the cell inner membrane. Its function is as follows. Essential cell division protein that stabilizes the FtsZ protofilaments by cross-linking them and that serves as a cytoplasmic membrane anchor for the Z ring. Also required for the recruitment to the septal ring of downstream cell division proteins. The polypeptide is Cell division protein ZipA (Shewanella baltica (strain OS185)).